Consider the following 421-residue polypeptide: Phosphoglycerate kinase, cytosolic (421 aa).

Residues V23, D24, F25, N26, R39, S61, H62, G64, R65, R135, H172, and R173 each contribute to the (2R)-3-phosphoglycerate site. The ADP site is built by G218 and A219. G218 is a CDP binding site. AMP-binding residues include A219 and K220. ATP is bound at residue A219. Residue A219 coordinates Mg(2+). K220 serves as a coordination point for (2R)-3-phosphoglycerate. Position 223 (D223) interacts with CDP. D223 contributes to the Mg(2+) binding site. The ADP site is built by K224 and G242. K224 contacts AMP. ATP is bound at residue K224. G242 contacts CDP. A243 and A315 together coordinate AMP. Positions 243 and 315 each coordinate ATP. 2 residues coordinate ADP: A315 and N339. Residues G340 and F345 each coordinate CDP. Residues F345, E346, D378, and S379 each contribute to the ADP site. AMP is bound at residue E346. Positions 346, 378, and 379 each coordinate ATP. A Mg(2+)-binding site is contributed by D378.

The protein belongs to the phosphoglycerate kinase family. Monomer. The cofactor is Mg(2+).

Its subcellular location is the cytoplasm. The catalysed reaction is (2R)-3-phosphoglycerate + ATP = (2R)-3-phospho-glyceroyl phosphate + ADP. Its pathway is carbohydrate degradation; glycolysis; pyruvate from D-glyceraldehyde 3-phosphate: step 2/5. In Trypanosoma brucei brucei, this protein is Phosphoglycerate kinase, cytosolic.